The primary structure comprises 305 residues: tRNA uridine(34) hydroxylase (305 aa).

One can recognise a Rhodanese domain in the interval 125–219 (ADENTVVVDK…YLEEVPREQS (95 aa)). Catalysis depends on Cys179, which acts as the Cysteine persulfide intermediate.

It belongs to the TrhO family.

It catalyses the reaction uridine(34) in tRNA + AH2 + O2 = 5-hydroxyuridine(34) in tRNA + A + H2O. Functionally, catalyzes oxygen-dependent 5-hydroxyuridine (ho5U) modification at position 34 in tRNAs. This Brucella abortus (strain S19) protein is tRNA uridine(34) hydroxylase.